A 755-amino-acid polypeptide reads, in one-letter code: MSGTNLDGNDEFDEQLRMQELYGDGKDGDTQTDAGGEPDSLGQQPTDTPYEWDLDKKAWFPKITEDFIATYQANYGFSNDGASSSTANVEDVHARTAEEPPQEKAPEPTDARKKGEKRKAESGWFHVEEDRNTNVYVSGLPPDITVDEFIQLMSKFGIIMRDPQTEEFKVKLYKDNQGNLKGDGLCCYLKRESVELALKLLDEDEIRGYKLHVEVAKFQLKGEYDASKKKKKCKDYKKKLSMQQKQLDWRPERRAGPSRMRHERVVIIKNMFHPMDFEDDPLVLNEIREDLRVECSKFGQIRKLLLFDRHPDGVASVSFRDPEEADYCIQTLDGRWFGGRQITAQAWDGTTDYQVEETSREREERLRGWEAFLNAPEANRGLRRSDSVSASERAGPSRARHFSEHPSTSKMNAQETATGMAFEEPIDEKKFEKTEDGGEFEEGASENNAKESSPEKEAEEGCPEKESEEGCPKRGFEGSCSQKESEEGNPVRGSEEDSPKKESKKKTLKNDCEENGLAKESEDDLNKESEEEVGPTKESEEDDSEKESDEDCSEKQSEDGSEREFEENGLEKDLDEEGSEKELHENVLDKELEENDSENSEFEDDGSEKVLDEEGSEREFDEDSDEKEEEEDTYEKVFDDESDEKEDEEYADEKGLEAADKKAEEGDADEKLFEESDDKEDEDADGKEVEDADEKLFEDDDSNEKLFDEEEDSSEKLFDDSDERGTLGGFGSVEEGPLSTGSSFILSSDDDDDDI.

Disordered regions lie at residues 1-53 (MSGT…YEWD) and 81-122 (GASS…KAES). Residue S2 is modified to N-acetylserine. Residues 90–122 (EDVHARTAEEPPQEKAPEPTDARKKGEKRKAES) show a composition bias toward basic and acidic residues. RRM domains are found at residues 133–218 (TNVY…VAKF) and 264–349 (RVVI…AWDG). A U2AF homology motif (UHM) region spans residues 259 to 353 (RMRHERVVII…AQAWDGTTDY (95 aa)). An N6-acetyllysine modification is found at K297. Residues 380-415 (RGLRRSDSVSASERAGPSRARHFSEHPSTSKMNAQE) form a disordered region. The mediates interaction with the P-TEFb complex stretch occupies residues 381–755 (GLRRSDSVSA…LSSDDDDDDI (375 aa)). A phosphoserine mark is found at S387, S403, S407, and S409. The segment covering 405-415 (HPSTSKMNAQE) has biased composition (polar residues). Glycyl lysine isopeptide (Lys-Gly) (interchain with G-Cter in SUMO2) cross-links involve residues K429 and K430. The disordered stretch occupies residues 433–755 (KTEDGGEFEE…LSSDDDDDDI (323 aa)). Phosphoserine occurs at positions 445, 452, and 453. Residues 462-476 (CPEKESEEGCPKRGF) are compositionally biased toward basic and acidic residues. Phosphoserine occurs at positions 481, 485, 494, 498, 521, and 529. The span at 508-538 (LKNDCEENGLAKESEDDLNKESEEEVGPTKE) shows a compositional bias: basic and acidic residues. Residues 539–552 (SEEDDSEKESDEDC) are compositionally biased toward acidic residues. Residues 553–563 (SEKQSEDGSER) show a composition bias toward basic and acidic residues. 3 positions are modified to phosphoserine: S557, S561, and S579. Positions 564 to 579 (EFEENGLEKDLDEEGS) are enriched in acidic residues. The segment covering 580–590 (EKELHENVLDK) has biased composition (basic and acidic residues). A compositionally biased stretch (acidic residues) spans 591–606 (ELEENDSENSEFEDDG). Phosphoserine occurs at positions 597, 600, 607, 616, and 624. Composition is skewed to acidic residues over residues 613 to 633 (EEGSEREFDEDSDEKEEEEDT) and 640 to 651 (DESDEKEDEEYA). T633 carries the post-translational modification Phosphothreonine. S642 is subject to Phosphoserine. The span at 652-674 (DEKGLEAADKKAEEGDADEKLFE) shows a compositional bias: basic and acidic residues. Residues 675–713 (ESDDKEDEDADGKEVEDADEKLFEDDDSNEKLFDEEEDS) show a composition bias toward acidic residues. Phosphoserine is present on residues S676, S702, S713, S714, and S721. Residues 714–725 (SEKLFDDSDERG) show a composition bias toward basic and acidic residues. S748 bears the Phosphoserine; by CK2 mark.

This sequence belongs to the HTATSF1 family. In terms of assembly, component of the 17S U2 SnRNP complex, a ribonucleoprotein complex that contains small nuclear RNA (snRNA) U2 and a number of specific proteins. Within the 17S U2 SnRNP complex, interacts (via UHM region) directly with SF3B1. Component of a complex which is at least composed of HTATSF1/Tat-SF1, the P-TEFb complex components CDK9 and CCNT1, RNA polymerase II, SUPT5H, and NCL/nucleolin. Interacts with GTF2F2/RAP30 and POLR2A. Interacts with TCERG1/CA150. Interacts with (poly-ADP-ribosylated) RPA1; promoting HTATSF1 recruitment to DNA damage sites. Interacts (when phosphorylated) with TOPBP1; promoting recruitment of TOPBP1 to DNA damage sites during S-phase. Phosphorylation at Ser-748 by CK2 during S-phase in response to DNA damage promotes interaction with TOPBP1 and double-strand break (DSB) repair via homologous recombination. In terms of tissue distribution, widely expressed.

It is found in the nucleus. The protein localises to the chromosome. In terms of biological role, component of the 17S U2 SnRNP complex of the spliceosome, a large ribonucleoprotein complex that removes introns from transcribed pre-mRNAs. The 17S U2 SnRNP complex (1) directly participates in early spliceosome assembly and (2) mediates recognition of the intron branch site during pre-mRNA splicing by promoting the selection of the pre-mRNA branch-site adenosine, the nucleophile for the first step of splicing. Within the 17S U2 SnRNP complex, HTATSF1 is required to stabilize the branchpoint-interacting stem loop. HTATSF1 is displaced from the 17S U2 SnRNP complex before the stable addition of the 17S U2 SnRNP complex to the spliceosome, destabilizing the branchpoint-interacting stem loop and allowing to probe intron branch site sequences. Also acts as a regulator of transcriptional elongation, possibly by mediating the reciprocal stimulatory effect of splicing on transcriptional elongation. Involved in double-strand break (DSB) repair via homologous recombination in S-phase by promoting the recruitment of TOPBP1 to DNA damage sites. Mechanistically, HTATSF1 is (1) recruited to DNA damage sites in S-phase via interaction with poly-ADP-ribosylated RPA1 and (2) phosphorylated by CK2, promoting recruitment of TOPBP1, thereby facilitating RAD51 nucleofilaments formation and RPA displacement, followed by homologous recombination. Its function is as follows. (Microbial infection) In case of infection by HIV-1, it is up-regulated by the HIV-1 proteins NEF and gp120, acts as a cofactor required for the Tat-enhanced transcription of the virus. This chain is 17S U2 SnRNP complex component HTATSF1, found in Homo sapiens (Human).